A 183-amino-acid chain; its full sequence is Potassium-transporting ATPase KdpC subunit (183 aa).

A helical transmembrane segment spans residues 11–31 (LALLMTLLTGVLYPLAVTGVA).

Belongs to the KdpC family. As to quaternary structure, the system is composed of three essential subunits: KdpA, KdpB and KdpC.

The protein localises to the cell inner membrane. Part of the high-affinity ATP-driven potassium transport (or Kdp) system, which catalyzes the hydrolysis of ATP coupled with the electrogenic transport of potassium into the cytoplasm. This subunit acts as a catalytic chaperone that increases the ATP-binding affinity of the ATP-hydrolyzing subunit KdpB by the formation of a transient KdpB/KdpC/ATP ternary complex. This is Potassium-transporting ATPase KdpC subunit from Pseudomonas putida (strain GB-1).